The following is a 950-amino-acid chain: Bifunctional glutamine synthetase adenylyltransferase/adenylyl-removing enzyme (950 aa).

The segment at 1–443 is adenylyl removase; sequence MSLPSPLIPV…VFVTLIGDEE (443 aa). An adenylyl transferase region spans residues 450 to 950; that stretch reads ERHFNELWDM…WQEWLESSTI (501 aa).

This sequence belongs to the GlnE family. It depends on Mg(2+) as a cofactor.

It catalyses the reaction [glutamine synthetase]-O(4)-(5'-adenylyl)-L-tyrosine + phosphate = [glutamine synthetase]-L-tyrosine + ADP. It carries out the reaction [glutamine synthetase]-L-tyrosine + ATP = [glutamine synthetase]-O(4)-(5'-adenylyl)-L-tyrosine + diphosphate. In terms of biological role, involved in the regulation of glutamine synthetase GlnA, a key enzyme in the process to assimilate ammonia. When cellular nitrogen levels are high, the C-terminal adenylyl transferase (AT) inactivates GlnA by covalent transfer of an adenylyl group from ATP to specific tyrosine residue of GlnA, thus reducing its activity. Conversely, when nitrogen levels are low, the N-terminal adenylyl removase (AR) activates GlnA by removing the adenylyl group by phosphorolysis, increasing its activity. The regulatory region of GlnE binds the signal transduction protein PII (GlnB) which indicates the nitrogen status of the cell. This is Bifunctional glutamine synthetase adenylyltransferase/adenylyl-removing enzyme from Vibrio vulnificus (strain CMCP6).